A 499-amino-acid chain; its full sequence is Ribulose bisphosphate carboxylase large chain (499 aa).

2 residues coordinate substrate: Asn139 and Thr189. The active-site Proton acceptor is Lys191. Residue Lys193 coordinates substrate. Mg(2+) is bound by residues Lys217, Asp219, and Glu220. N6-carboxylysine is present on Lys217. His309 acts as the Proton acceptor in catalysis. Residues Arg310, His342, and Ser394 each coordinate substrate.

Belongs to the RuBisCO large chain family. Type I subfamily. Heterohexadecamer of 8 large chains and 8 small chains. Requires Mg(2+) as cofactor.

It catalyses the reaction 2 (2R)-3-phosphoglycerate + 2 H(+) = D-ribulose 1,5-bisphosphate + CO2 + H2O. The catalysed reaction is D-ribulose 1,5-bisphosphate + O2 = 2-phosphoglycolate + (2R)-3-phosphoglycerate + 2 H(+). RuBisCO catalyzes two reactions: the carboxylation of D-ribulose 1,5-bisphosphate, the primary event in carbon dioxide fixation, as well as the oxidative fragmentation of the pentose substrate. Both reactions occur simultaneously and in competition at the same active site. The sequence is that of Ribulose bisphosphate carboxylase large chain from Paraburkholderia xenovorans (strain LB400).